The sequence spans 240 residues: Uridylate kinase (240 aa).

12-15 (KLSG) is an ATP binding site. The tract at residues 20-25 (GEKGFG) is involved in allosteric activation by GTP. A UMP-binding site is contributed by G54. Positions 55 and 59 each coordinate ATP. UMP contacts are provided by residues D74 and 135–142 (TGSPYFST). ATP contacts are provided by N163, Y169, and D172.

This sequence belongs to the UMP kinase family. As to quaternary structure, homohexamer.

It localises to the cytoplasm. It catalyses the reaction UMP + ATP = UDP + ADP. It functions in the pathway pyrimidine metabolism; CTP biosynthesis via de novo pathway; UDP from UMP (UMPK route): step 1/1. With respect to regulation, allosterically activated by GTP. Inhibited by UTP. Catalyzes the reversible phosphorylation of UMP to UDP. The chain is Uridylate kinase from Lactiplantibacillus plantarum (strain ATCC BAA-793 / NCIMB 8826 / WCFS1) (Lactobacillus plantarum).